We begin with the raw amino-acid sequence, 496 residues long: NADP-dependent glyceraldehyde-3-phosphate dehydrogenase (496 aa).

Substrate-binding positions include arginine 116 and 169–170; that span reads NY. NADP(+)-binding residues include lysine 192, threonine 195, and aspartate 230. 245–249 provides a ligand contact to NAD(+); that stretch reads GGDTG. The active-site Proton acceptor is glutamate 264. Substrate is bound at residue 297 to 299; the sequence is RCT. Cysteine 298 (nucleophile) is an active-site residue. An NADP(+)-binding site is contributed by glutamate 391. Substrate is bound at residue arginine 451.

The protein belongs to the aldehyde dehydrogenase family.

The protein localises to the cytoplasm. It catalyses the reaction D-glyceraldehyde 3-phosphate + NADP(+) + H2O = (2R)-3-phosphoglycerate + NADPH + 2 H(+). Its function is as follows. Important as a means of generating NADPH for biosynthetic reactions. In Pisum sativum (Garden pea), this protein is NADP-dependent glyceraldehyde-3-phosphate dehydrogenase (GAPN).